Here is a 103-residue protein sequence, read N- to C-terminus: Small ribosomal subunit protein uS10 (103 aa).

It belongs to the universal ribosomal protein uS10 family. As to quaternary structure, part of the 30S ribosomal subunit.

Its function is as follows. Involved in the binding of tRNA to the ribosomes. This chain is Small ribosomal subunit protein uS10, found in Chlorobium phaeobacteroides (strain DSM 266 / SMG 266 / 2430).